The following is a 200-amino-acid chain: ATP-dependent Clp protease proteolytic subunit (200 aa).

The active-site Nucleophile is S102. The active site involves H127.

It belongs to the peptidase S14 family. In terms of assembly, fourteen ClpP subunits assemble into 2 heptameric rings which stack back to back to give a disk-like structure with a central cavity, resembling the structure of eukaryotic proteasomes.

It localises to the cytoplasm. It catalyses the reaction Hydrolysis of proteins to small peptides in the presence of ATP and magnesium. alpha-casein is the usual test substrate. In the absence of ATP, only oligopeptides shorter than five residues are hydrolyzed (such as succinyl-Leu-Tyr-|-NHMec, and Leu-Tyr-Leu-|-Tyr-Trp, in which cleavage of the -Tyr-|-Leu- and -Tyr-|-Trp bonds also occurs).. Its function is as follows. Cleaves peptides in various proteins in a process that requires ATP hydrolysis. Has a chymotrypsin-like activity. Plays a major role in the degradation of misfolded proteins. The chain is ATP-dependent Clp protease proteolytic subunit from Dehalococcoides mccartyi (strain ATCC BAA-2100 / JCM 16839 / KCTC 5957 / BAV1).